A 168-amino-acid chain; its full sequence is Ribosome maturation factor RimM (168 aa).

The PRC barrel domain maps to 93–168; sequence EDEFYQSDLV…IVLNIPEFID (76 aa).

Belongs to the RimM family. In terms of assembly, binds ribosomal protein uS19.

It is found in the cytoplasm. An accessory protein needed during the final step in the assembly of 30S ribosomal subunit, possibly for assembly of the head region. Essential for efficient processing of 16S rRNA. May be needed both before and after RbfA during the maturation of 16S rRNA. It has affinity for free ribosomal 30S subunits but not for 70S ribosomes. The chain is Ribosome maturation factor RimM from Wolbachia pipientis wMel.